Reading from the N-terminus, the 796-residue chain is Cation/H(+) antiporter 6B (796 aa).

The next 13 helical transmembrane spans lie at 54-74, 93-113, 131-151, 159-179, 194-213, 223-243, 259-279, 285-305, 310-330, 344-364, 382-402, 411-431, and 444-464; these read DFWE…FLLW, SMML…IPCL, IGAF…DVGI, SVVI…LLYS, YTVM…NMLL, FGQI…FLTV, LAFM…LWVI, GAPV…LSYL, FLFF…NGPP, EGIF…WSFL, FSFL…AALA, IILG…VLTA, and LLGV…HFLY.

The protein belongs to the monovalent cation:proton antiporter 2 (CPA2) transporter (TC 2.A.37) family. CHX (TC 2.A.37.4) subfamily. Preferentially expressed in pollen.

It is found in the membrane. In terms of biological role, may operate as a cation/H(+) antiporter. This Arabidopsis thaliana (Mouse-ear cress) protein is Cation/H(+) antiporter 6B (CHX6b).